The chain runs to 895 residues: MTAWTMGARGLDKRGSFFKLIDTIASEIGELKQEMVRTDVNLENGLEPAETHSMVRHKDGGYSEEEDVKTCARDSGYDSLSNRLSILDRLLHTHPIWLQLSLSEEEAAEVLQAQPPGIFLVHKSTKMQKKVLSLRLPCEFGAPLKEFAIKESTYTFSLEGSGISFADLFRLIAFYCISRDVLPFTLKLPYAISTAKSEAQLEELAQMGLNFWSSPADSKPPNLPPPHRPLSSDGVCPASLRQLCLINGVHSIKTRTPSELECSQTNGALCFINPLFLKVHSQDLSGGLKRPSTRTPNANGTERTRSPPPRPPPPAINSLHTSPRLARTETQTSMPETVNHNKHGNVALPGTKPTPIPPPRLKKQASFLEAEGGAKTLSGGRPGAGPELELGTAGSPGGAPPEAAPGDCTRAPPPSSESRPPCHGGRQRLSDMSISTSSSDSLEFDRSMPLFGYEADTNSSLEDYEGESDQETMAPPIKSKKKRSSSFVLPKLVKSQLQKVSGVFSSFMTPEKRMVRRIAELSRDKCTYFGCLVQDYVSFLQENKECHVSSTDMLQTIRQFMTQVKNYLSQSSELDPPIESLIPEDQIDVVLEKAMHKCILKPLKGHVEAMLKDFHMADGSWKQLKENLQLVRQRNPQELGVFAPTPDFVDVEKIKVKFMTMQKMYSPEKKVMLLLRVCKLIYTVMENNSGRMYGADDFLPVLTYVIAQCDMLELDTEIEYMMELLDPSLLHGEGGYYLTSAYGALSLIKNFQEEQAARLLSSETRDTLRQWHKRRTTNRTIPSVDDFQNYLRVAFQEVNSGCTGKTLLVRPYITTEDVCQICAEKFKVGDPEEYSLFLFVDETWQQLAEDTYPQKIKAELHSRPQPHIFHFVYKRIKNDPYGIIFQNGEEDLTTS.

The SH2 domain maps to 97-190 (WLQLSLSEEE…VLPFTLKLPY (94 aa)). The disordered stretch occupies residues 284-361 (LSGGLKRPST…KPTPIPPPRL (78 aa)). The segment covering 306 to 315 (SPPPRPPPPA) has biased composition (pro residues). Over residues 328–338 (TETQTSMPETV) the composition is skewed to polar residues. The residue at position 366 (S366) is a Phosphoserine. Disordered regions lie at residues 373 to 442 (GAKT…SDSL) and 460 to 481 (SLED…KSKK). Residues 430-441 (SDMSISTSSSDS) are compositionally biased toward low complexity. Residue S501 is modified to Phosphoserine. T509 is modified (phosphothreonine). A VPS9 domain is found at 618–757 (DGSWKQLKEN…IKNFQEEQAA (140 aa)). Residues 787–878 (FQNYLRVAFQ…FHFVYKRIKN (92 aa)) enclose the Ras-associating domain.

The protein belongs to the RIN (Ras interaction/interference) family. In terms of assembly, homotetramer; probably composed of anti-parallel linkage of two parallel dimers. Interacts with Ras. Interacts with RAB5B, with a much higher affinity for GTP-bound activated RAB5B. Does not interact with other members of the Rab family. As to expression, widely expressed. Expressed in heart, kidney, lung placenta. Expressed at low level in skeletal muscle, spleen and peripheral blood.

Its subcellular location is the cytoplasm. Its function is as follows. Ras effector protein. May function as an upstream activator and/or downstream effector for RAB5B in endocytic pathway. May function as a guanine nucleotide exchange (GEF) of RAB5B, required for activating the RAB5 proteins by exchanging bound GDP for free GTP. This Homo sapiens (Human) protein is Ras and Rab interactor 2 (RIN2).